Reading from the N-terminus, the 259-residue chain is uncharacterized protein (259 aa).

One can recognise an FAD-binding PCMH-type domain in the interval 1–159 (MIEQFFRPDS…TEIIIKDPYR (159 aa)).

This is an uncharacterized protein from Escherichia coli O157:H7.